The following is a 422-amino-acid chain: Keratan-sulfate endo-1,4-beta-galactosidase (422 aa).

The first 46 residues, 1 to 46 (MRKTKFWLVLSLIATSLSIFACKKDSTATKNPIPEVSKAKASTKLL), serve as a signal peptide directing secretion. The GH16 domain maps to 47–292 (NATTVATTDY…YVRVYKLPLF (246 aa)). Glu-171 serves as the catalytic Nucleophile. The Proton donor role is filled by Glu-176. The region spanning 291–406 (LFSNGDFESG…NTTATVYFYK (116 aa)) is the CBM-cenC domain.

It belongs to the glycosyl hydrolase 16 family.

It localises to the secreted. The catalysed reaction is Endohydrolysis of (1-&gt;4)-beta-D-galactosidic linkages in keratan sulfate.. Hydrolyzes internal endo-beta-galactosyl linkages in keratan sulfate and in various neolacto-type glycosphingolipids, producing sulfated and non-sulfated disaccharides, and glucosylceramides respectivly. This is Keratan-sulfate endo-1,4-beta-galactosidase from Sphingobacterium multivorum.